Here is a 1072-residue protein sequence, read N- to C-terminus: Carbamoyl phosphate synthase large chain (1072 aa).

Positions 1–401 (MPKRLDINTI…SLLKAVRSLE (401 aa)) are carboxyphosphate synthetic domain. ATP is bound by residues Arg129, Arg169, Gly175, Gly176, Lys208, Ile210, Glu215, Gly241, Val242, His243, Gln284, and Glu298. The region spanning 133–327 (RTLMQDLNEP…IAKLAAKIAV (195 aa)) is the ATP-grasp 1 domain. Positions 284, 298, and 300 each coordinate Mg(2+). Mn(2+) is bound by residues Gln284, Glu298, and Asn300. The oligomerization domain stretch occupies residues 402–546 (LGIYHLELDH…YSTYADENES (145 aa)). The carbamoyl phosphate synthetic domain stretch occupies residues 547–929 (IVTDRKSVVV…ALYKGLVASG (383 aa)). Residues 671–861 (EAALTKLGIP…MANVATKVIL (191 aa)) enclose the ATP-grasp 2 domain. ATP is bound by residues Arg707, Arg746, Glu752, Gly777, Val778, His779, Ser780, Gln820, and Glu832. Gln820, Glu832, and Asn834 together coordinate Mg(2+). Residues Gln820, Glu832, and Asn834 each coordinate Mn(2+). The region spanning 930-1072 (INIPTHGSVI…QTKRHEVVHA (143 aa)) is the MGS-like domain. Residues 930–1072 (INIPTHGSVI…QTKRHEVVHA (143 aa)) are allosteric domain.

This sequence belongs to the CarB family. Composed of two chains; the small (or glutamine) chain promotes the hydrolysis of glutamine to ammonia, which is used by the large (or ammonia) chain to synthesize carbamoyl phosphate. Tetramer of heterodimers (alpha,beta)4. Requires Mg(2+) as cofactor. It depends on Mn(2+) as a cofactor.

It carries out the reaction hydrogencarbonate + L-glutamine + 2 ATP + H2O = carbamoyl phosphate + L-glutamate + 2 ADP + phosphate + 2 H(+). The catalysed reaction is hydrogencarbonate + NH4(+) + 2 ATP = carbamoyl phosphate + 2 ADP + phosphate + 2 H(+). The protein operates within amino-acid biosynthesis; L-arginine biosynthesis; carbamoyl phosphate from bicarbonate: step 1/1. Its pathway is pyrimidine metabolism; UMP biosynthesis via de novo pathway; (S)-dihydroorotate from bicarbonate: step 1/3. Its function is as follows. Large subunit of the glutamine-dependent carbamoyl phosphate synthetase (CPSase). CPSase catalyzes the formation of carbamoyl phosphate from the ammonia moiety of glutamine, carbonate, and phosphate donated by ATP, constituting the first step of 2 biosynthetic pathways, one leading to arginine and/or urea and the other to pyrimidine nucleotides. The large subunit (synthetase) binds the substrates ammonia (free or transferred from glutamine from the small subunit), hydrogencarbonate and ATP and carries out an ATP-coupled ligase reaction, activating hydrogencarbonate by forming carboxy phosphate which reacts with ammonia to form carbamoyl phosphate. This chain is Carbamoyl phosphate synthase large chain, found in Bacillus cereus (strain ATCC 14579 / DSM 31 / CCUG 7414 / JCM 2152 / NBRC 15305 / NCIMB 9373 / NCTC 2599 / NRRL B-3711).